A 161-amino-acid chain; its full sequence is Ragulator complex protein LAMTOR1 (161 aa).

A disordered region spans residues 1–43 (MGCCYSSENEDSDQDREERKLLLDPSSTPTKALNGAEPNYHSL). Gly-2 carries the N-myristoyl glycine lipid modification. 2 S-palmitoyl cysteine lipidation sites follow: Cys-3 and Cys-4. Lys-20 participates in a covalent cross-link: Glycyl lysine isopeptide (Lys-Gly) (interchain with G-Cter in ubiquitin). Phosphoserine is present on Ser-27. Thr-28 bears the Phosphothreonine mark. Lys-31 is covalently cross-linked (Glycyl lysine isopeptide (Lys-Gly) (interchain with G-Cter in ubiquitin)). 2 positions are modified to phosphoserine: Ser-42 and Ser-56. Lys-60 participates in a covalent cross-link: Glycyl lysine isopeptide (Lys-Gly) (interchain with G-Cter in ubiquitin). Ser-98 bears the Phosphoserine mark. Glycyl lysine isopeptide (Lys-Gly) (interchain with G-Cter in ubiquitin) cross-links involve residues Lys-103 and Lys-104. Residues 121-161 (SEPIPFSDLQQVSRIAAYAYSALSQIRVDAKEELVVQFGIP) form an interaction with LAMTOR2 and LAMTOR3 region. Position 141 is a phosphoserine (Ser-141).

This sequence belongs to the LAMTOR1 family. In terms of assembly, part of the Ragulator complex composed of LAMTOR1, LAMTOR2, LAMTOR3, LAMTOR4 and LAMTOR5. LAMTOR4 and LAMTOR5 form a heterodimer that interacts, through LAMTOR1, with a LAMTOR2, LAMTOR3 heterodimer. Interacts with LAMTOR2 and LAMTOR3; the interaction is direct. The Ragulator complex interacts with both the mTORC1 complex and heterodimers constituted of the Rag GTPases RagA/RRAGA, RagB/RRAGB, RagC/RRAGC and RagD/RRAGD; regulated by amino acid availability. The Ragulator complex interacts with SLC38A9; the probable amino acid sensor. Component of the lysosomal folliculin complex (LFC), composed of FLCN, FNIP1 (or FNIP2), RagA/RRAGA or RagB/RRAGB GDP-bound, RagC/RRAGC or RagD/RRAGD GTP-bound, and Ragulator. Associates with the lysosomal V-ATPase complex; interaction promotes the guanine nucleotide exchange factor (GEF) of the Ragulator complex. Interacts with MMP14. Interacts with CDKN1B; prevents the interaction of CDKN1B with RHOA leaving RHOA in a form accessible to activation by ARHGEF2. Interacts with PIP4P1. In terms of processing, N-terminal myristoylation and palmitoylation mediates its recruitment to lysosome membranes, thereby promoting localization of the Ragulator complex to lysosomes. N-myristoylation by NMT1 is required for palmitoylation at Cys-3 and Cys-4. Ubiquitinated at Lys-60, Lys-103 and Lys-104 by UBE3A in neurons, promoting its degradation by the proteasome, thereby limiting mTORC1 signaling and activity-dependent synaptic remodeling. Ubiquitination at Lys-20 impairs the association with the lysosomal V-ATPase complex. Deubiquitination at Lys-20 by USP32 promotes the association with the lysosomal V-ATPase complex and subsequent activation of the mTORC1 complex.

It is found in the lysosome membrane. The protein resides in the late endosome membrane. Key component of the Ragulator complex, a multiprotein complex involved in amino acid sensing and activation of mTORC1, a signaling complex promoting cell growth in response to growth factors, energy levels, and amino acids. Activated by amino acids through a mechanism involving the lysosomal V-ATPase, the Ragulator plays a dual role for the small GTPases Rag (RagA/RRAGA, RagB/RRAGB, RagC/RRAGC and/or RagD/RRAGD): it (1) acts as a guanine nucleotide exchange factor (GEF), activating the small GTPases Rag and (2) mediates recruitment of Rag GTPases to the lysosome membrane. Activated Ragulator and Rag GTPases function as a scaffold recruiting mTORC1 to lysosomes where it is in turn activated. LAMTOR1 is directly responsible for anchoring the Ragulator complex to the lysosomal membrane. LAMTOR1 wraps around the other subunits of the Ragulator complex to hold them in place and interacts with the Rag GTPases, thereby playing a key role in the recruitment of the mTORC1 complex to lysosomes. Also involved in the control of embryonic stem cells differentiation via non-canonical RagC/RRAGC and RagD/RRAGD activation: together with FLCN, it is necessary to recruit and activate RagC/RRAGC and RagD/RRAGD at the lysosomes, and to induce exit of embryonic stem cells from pluripotency via non-canonical, mTOR-independent TFE3 inactivation. Also required for late endosomes/lysosomes biogenesis it may regulate both the recycling of receptors through endosomes and the MAPK signaling pathway through recruitment of some of its components to late endosomes. May be involved in cholesterol homeostasis regulating LDL uptake and cholesterol release from late endosomes/lysosomes. May also play a role in RHOA activation. This chain is Ragulator complex protein LAMTOR1, found in Mus musculus (Mouse).